Reading from the N-terminus, the 582-residue chain is ATP-dependent lipid A-core flippase (582 aa).

5 helical membrane passes run 26–46 (LIAA…LIYL), 68–88 (ILVM…SYCL), 140–160 (YVLV…AVMV), 164–184 (WQLS…ISIV), and 252–272 (GLVQ…ATFP). Positions 27–310 (IAASVALILN…LTSVNSQFQR (284 aa)) constitute an ABC transmembrane type-1 domain. Residues 342–578 (ITFDNVIFSY…GGAYKQLYSM (237 aa)) form the ABC transporter domain. 376 to 383 (GRSGSGKS) provides a ligand contact to ATP.

The protein belongs to the ABC transporter superfamily. Lipid exporter (TC 3.A.1.106) family. Homodimer.

The protein localises to the cell inner membrane. The enzyme catalyses ATP + H2O + lipid A-core oligosaccharideSide 1 = ADP + phosphate + lipid A-core oligosaccharideSide 2.. Its function is as follows. Involved in lipopolysaccharide (LPS) biosynthesis. Translocates lipid A-core from the inner to the outer leaflet of the inner membrane. Transmembrane domains (TMD) form a pore in the inner membrane and the ATP-binding domain (NBD) is responsible for energy generation. This is ATP-dependent lipid A-core flippase from Haemophilus ducreyi (strain 35000HP / ATCC 700724).